The following is a 294-amino-acid chain: uncharacterized protein (294 aa).

The region spanning 13-151 (QCSQIRPYLY…LIDLEQKLRG (139 aa)) is the Tyrosine-protein phosphatase domain. Cysteine 95 (phosphocysteine intermediate) is an active-site residue. Residues 234–294 (PTLLVPSSSS…WRLSFHKDVV (61 aa)) form a disordered region.

It belongs to the protein-tyrosine phosphatase family. Non-receptor class dual specificity subfamily.

This is an uncharacterized protein from Caenorhabditis elegans.